Reading from the N-terminus, the 593-residue chain is Immunoglobulin G-binding protein G (593 aa).

Positions 1–33 are cleaved as a signal peptide; sequence MEKEKKVKYFLRKSAFGLASVSAAFLVGSTVFA. A run of 5 repeats spans residues 104–140, 179–215, 254–290, 303–357, and 373–427. A 3 X 37 AA repeats region spans residues 104 to 290; sequence LAKAKADALK…AKTVEGVKAL (187 aa). The tract at residues 303-427 is 2 X 55 AA repeats; it reads TYKLILNGKT…DATKTFTVTE (125 aa). Positions 503-567 are disordered; the sequence is PGDAPTEPEK…TLPTTGEGSN (65 aa). A compositionally biased stretch (basic and acidic residues) spans 529-557; the sequence is AKDDAKKDDTKKEDAKKPEAKKEDAKKAE. A 5 X 5 AA repeats of [DE]-D-A-K-K region spans residues 531–555; the sequence is DDAKKDDTKKEDAKKPEAKKEDAKK. The short motif at 559-563 is the LPXTG sorting signal element; that stretch reads LPTTG. T562 is subject to Pentaglycyl murein peptidoglycan amidated threonine. Positions 563–593 are cleaved as a propeptide — removed by sortase; that stretch reads GEGSNPFFTAAALAVMAGAGALAVASKRKED.

The protein resides in the secreted. It is found in the cell wall. The polypeptide is Immunoglobulin G-binding protein G (spg) (Streptococcus sp. group G).